Reading from the N-terminus, the 68-residue chain is ATP synthase F(0) complex subunit 8 (68 aa).

Residues 8–24 (TWFTTILSMFLTLFIIF) form a helical membrane-spanning segment. Lys54 carries the post-translational modification N6-acetyllysine; alternate. Residue Lys54 is modified to N6-succinyllysine; alternate. Lys57 carries the N6-acetyllysine modification.

The protein belongs to the ATPase protein 8 family. In terms of assembly, component of the ATP synthase complex composed at least of ATP5F1A/subunit alpha, ATP5F1B/subunit beta, ATP5MC1/subunit c (homooctomer), MT-ATP6/subunit a, MT-ATP8/subunit 8, ATP5ME/subunit e, ATP5MF/subunit f, ATP5MG/subunit g, ATP5MK/subunit k, ATP5MJ/subunit j, ATP5F1C/subunit gamma, ATP5F1D/subunit delta, ATP5F1E/subunit epsilon, ATP5PF/subunit F6, ATP5PB/subunit b, ATP5PD/subunit d, ATP5PO/subunit OSCP. ATP synthase complex consists of a soluble F(1) head domain (subunits alpha(3) and beta(3)) - the catalytic core - and a membrane F(0) domain - the membrane proton channel (subunits c, a, 8, e, f, g, k and j). These two domains are linked by a central stalk (subunits gamma, delta, and epsilon) rotating inside the F1 region and a stationary peripheral stalk (subunits F6, b, d, and OSCP). Interacts with PRICKLE3.

Its subcellular location is the mitochondrion membrane. Functionally, subunit 8, of the mitochondrial membrane ATP synthase complex (F(1)F(0) ATP synthase or Complex V) that produces ATP from ADP in the presence of a proton gradient across the membrane which is generated by electron transport complexes of the respiratory chain. ATP synthase complex consist of a soluble F(1) head domain - the catalytic core - and a membrane F(1) domain - the membrane proton channel. These two domains are linked by a central stalk rotating inside the F(1) region and a stationary peripheral stalk. During catalysis, ATP synthesis in the catalytic domain of F(1) is coupled via a rotary mechanism of the central stalk subunits to proton translocation. In vivo, can only synthesize ATP although its ATP hydrolase activity can be activated artificially in vitro. Part of the complex F(0) domain. This chain is ATP synthase F(0) complex subunit 8, found in Hippopotamus amphibius (Hippopotamus).